A 299-amino-acid chain; its full sequence is DNA-binding transcriptional activator HetR (299 aa).

The active site involves Ser-152.

Belongs to the peptidase S48 family. As to quaternary structure, homodimer; disulfide-linked.

Its function is as follows. Might be involved in temporal and/or spatial regulation of nitrogen fixation. Dimerization is required for DNA-binding. Has both a protease and a DNA-binding activity. The chain is DNA-binding transcriptional activator HetR from Leptolyngbya boryana (Plectonema boryanum).